The sequence spans 316 residues: Protoheme IX farnesyltransferase (316 aa).

9 helical membrane passes run 29–49 (IIPL…EGRV), 54–74 (LLIT…LNCI), 102–122 (LIFA…FVNV), 123–143 (LSGC…THWL), 151–171 (IVIG…AVTG), 179–199 (VLFA…ALMI), 224–241 (IWYY…LVYP), 245–267 (LGIL…AWQL), and 283–303 (FSIF…LPVT).

The protein belongs to the UbiA prenyltransferase family. Protoheme IX farnesyltransferase subfamily.

It localises to the cell inner membrane. It carries out the reaction heme b + (2E,6E)-farnesyl diphosphate + H2O = Fe(II)-heme o + diphosphate. It functions in the pathway porphyrin-containing compound metabolism; heme O biosynthesis; heme O from protoheme: step 1/1. Functionally, converts heme B (protoheme IX) to heme O by substitution of the vinyl group on carbon 2 of heme B porphyrin ring with a hydroxyethyl farnesyl side group. The sequence is that of Protoheme IX farnesyltransferase from Synechocystis sp. (strain ATCC 27184 / PCC 6803 / Kazusa).